The chain runs to 153 residues: Flagellar assembly factor FliW (153 aa).

The protein belongs to the FliW family. Interacts with translational regulator CsrA and flagellin(s).

The protein resides in the cytoplasm. Its function is as follows. Acts as an anti-CsrA protein, binds CsrA and prevents it from repressing translation of its target genes, one of which is flagellin. Binds to flagellin and participates in the assembly of the flagellum. This chain is Flagellar assembly factor FliW, found in Heliobacterium modesticaldum (strain ATCC 51547 / Ice1).